An 841-amino-acid polypeptide reads, in one-letter code: MRGLNLFQLILALLLSMVAAEDGYDGWLRYAPVSCDLRCRQALPSHVVLLNSTKGSPIETAGRELKAGFQSILSTNLTSRPFQCNSSTSILVATLDEYRQRCRDINVPELDPDGFWLQSEGDTVRILGKDARGALYGAYEYLAMVAQRNFSRVAYATSPHAPIRWVNQWDNMDGSIERGYGGASIFFKDGTVVEDMAPVEQYARLLASIRINAIVVNNVNANATLLLPENMKGLGRIADACRPYGVQIGISLNFASPEDLGGLNTYDPLDPGVIAWWQNITDSLYTYVPDMAGYLVKADSEGQPGPDTYNRTLSQGANLFARALQPYGGVLMYRAFVYDDNLNESDWKADRAKAAVEYFKDLDGQFEENVVIQIKYGPIDFQVREPTSPLFANLYHTNTAIELEVSQEYLGQQCHLVYLPPLWKTVLDFDLRVDHKPSMVRDIISGQRFNRTLGGWAAVVNVGTNRTWLGSHLAMSNLYAYGRLAWSPTDESEQILEDWTRLTFGQNHHVINTISDMSMTSWPAYENYTGNLGIQTLTDILYTHYGPNPATQDNNGWGQWTRADHDSVGMDRTIRNGTGYTGQYPEEVARVYESLESTPDDLVLWFHHVPWTHRLHSGVTVIQHFYNAHYAGAEAAHGFVRQWESLEGLIDRERYEAMRSRLVYQAGHSIVWRDAINNFYYNMTGIPDVAGRVGHHPWRIEAESMRLDGYQTYTVSPFEAASNTTAIITTSNSTTGTARTSIKAPSGVYDIGVNYYDLYGGQSKWTLSVGDKVVGQWLGDMEHNSLGHTPSIYLDGHSATRITFHGVGIRQGDQLKIVGEANGVEPAPLDYIVLLPPGLVD.

Residues methionine 1–alanine 20 form the signal peptide. N-linked (GlcNAc...) asparagine glycosylation is found at asparagine 51, asparagine 76, asparagine 85, asparagine 149, asparagine 222, asparagine 279, asparagine 310, asparagine 343, asparagine 450, asparagine 465, asparagine 527, asparagine 576, asparagine 682, asparagine 723, and asparagine 732.

Belongs to the glycosyl hydrolase 67 family.

The protein localises to the secreted. It carries out the reaction an alpha-D-glucuronoside + H2O = D-glucuronate + an alcohol. In terms of biological role, alpha-glucuronidase involved in the hydrolysis of xylan, a major structural heterogeneous polysaccharide found in plant biomass representing the second most abundant polysaccharide in the biosphere, after cellulose. Releases 4-O-methylglucuronic acid from xylan. In Aspergillus niger, this protein is Probable alpha-glucuronidase A (aguA).